A 156-amino-acid chain; its full sequence is Flagellar assembly factor FliW (156 aa).

This sequence belongs to the FliW family. Interacts with translational regulator CsrA and flagellin(s).

The protein resides in the cytoplasm. Acts as an anti-CsrA protein, binds CsrA and prevents it from repressing translation of its target genes, one of which is flagellin. Binds to flagellin and participates in the assembly of the flagellum. This Syntrophomonas wolfei subsp. wolfei (strain DSM 2245B / Goettingen) protein is Flagellar assembly factor FliW.